A 105-amino-acid chain; its full sequence is Nucleoid-associated protein EAT1b_1710 (105 aa).

Positions 1–16 are enriched in low complexity; the sequence is MRGMGNMNNMMKQMQK. The disordered stretch occupies residues 1 to 26; that stretch reads MRGMGNMNNMMKQMQKMQKDMAKAQE. Residues 17–26 show a composition bias toward basic and acidic residues; sequence MQKDMAKAQE.

This sequence belongs to the YbaB/EbfC family. As to quaternary structure, homodimer.

The protein localises to the cytoplasm. The protein resides in the nucleoid. Its function is as follows. Binds to DNA and alters its conformation. May be involved in regulation of gene expression, nucleoid organization and DNA protection. The polypeptide is Nucleoid-associated protein EAT1b_1710 (Exiguobacterium sp. (strain ATCC BAA-1283 / AT1b)).